Here is a 471-residue protein sequence, read N- to C-terminus: Glutamate--tRNA ligase (471 aa).

The short motif at 9-19 is the 'HIGH' region element; that stretch reads PSPTGYLHVGG. The Zn(2+) site is built by C98, C100, C125, and H127. The 'KMSKS' region signature appears at 237-241; sequence KLSKR. Residue K240 coordinates ATP.

This sequence belongs to the class-I aminoacyl-tRNA synthetase family. Glutamate--tRNA ligase type 1 subfamily. Monomer. The cofactor is Zn(2+).

The protein resides in the cytoplasm. The enzyme catalyses tRNA(Glu) + L-glutamate + ATP = L-glutamyl-tRNA(Glu) + AMP + diphosphate. In terms of biological role, catalyzes the attachment of glutamate to tRNA(Glu) in a two-step reaction: glutamate is first activated by ATP to form Glu-AMP and then transferred to the acceptor end of tRNA(Glu). The protein is Glutamate--tRNA ligase of Escherichia coli O9:H4 (strain HS).